A 295-amino-acid polypeptide reads, in one-letter code: Phosphoribosylaminoimidazole-succinocarboxamide synthase (295 aa).

The protein belongs to the SAICAR synthetase family.

The catalysed reaction is 5-amino-1-(5-phospho-D-ribosyl)imidazole-4-carboxylate + L-aspartate + ATP = (2S)-2-[5-amino-1-(5-phospho-beta-D-ribosyl)imidazole-4-carboxamido]succinate + ADP + phosphate + 2 H(+). Its pathway is purine metabolism; IMP biosynthesis via de novo pathway; 5-amino-1-(5-phospho-D-ribosyl)imidazole-4-carboxamide from 5-amino-1-(5-phospho-D-ribosyl)imidazole-4-carboxylate: step 1/2. This is Phosphoribosylaminoimidazole-succinocarboxamide synthase from Nitrosomonas europaea (strain ATCC 19718 / CIP 103999 / KCTC 2705 / NBRC 14298).